We begin with the raw amino-acid sequence, 333 residues long: MGIRVAVVGASGYAGGELLRLVAGHPEFELVTATAHSQAGHRLHTVHPQLIGLDLVLAETDPAALADADLVFLALPHGESAALAAQLPPKTRVVDLGADHRLADPYAWANYYGGTHAGQWTYGLSELPGQRERVAAATRVANPGCYATAIILALAPLIAAGAAQPADVVVVAASGVSGAGRAAKAHLLAGEVMGDLSPYRVGAHQHVPEIKQATGATSLSFTPVLAPMPRGILATVTAVPARGVDPQAVLAEAYADAPFVHVLPEGRWPHTAATLGSNSCHLQATVDVDAGRLIVVSGLDNLGRGAAGQAVQNANIMVGLPETTGLSAWGVTP.

C145 is an active-site residue.

This sequence belongs to the NAGSA dehydrogenase family. Type 1 subfamily.

The protein resides in the cytoplasm. The enzyme catalyses N-acetyl-L-glutamate 5-semialdehyde + phosphate + NADP(+) = N-acetyl-L-glutamyl 5-phosphate + NADPH + H(+). It functions in the pathway amino-acid biosynthesis; L-arginine biosynthesis; N(2)-acetyl-L-ornithine from L-glutamate: step 3/4. Its function is as follows. Catalyzes the NADPH-dependent reduction of N-acetyl-5-glutamyl phosphate to yield N-acetyl-L-glutamate 5-semialdehyde. The sequence is that of N-acetyl-gamma-glutamyl-phosphate reductase from Salinispora arenicola (strain CNS-205).